A 239-amino-acid chain; its full sequence is Orotidine 5'-phosphate decarboxylase (239 aa).

Substrate contacts are provided by residues aspartate 11, lysine 33, 60–69 (DLKFHDIPTT), threonine 117, arginine 178, glutamine 187, glycine 207, and arginine 208. The active-site Proton donor is the lysine 62.

It belongs to the OMP decarboxylase family. Type 1 subfamily. Homodimer.

The enzyme catalyses orotidine 5'-phosphate + H(+) = UMP + CO2. It functions in the pathway pyrimidine metabolism; UMP biosynthesis via de novo pathway; UMP from orotate: step 2/2. In terms of biological role, catalyzes the decarboxylation of orotidine 5'-monophosphate (OMP) to uridine 5'-monophosphate (UMP). This is Orotidine 5'-phosphate decarboxylase from Nitrosospira multiformis (strain ATCC 25196 / NCIMB 11849 / C 71).